The primary structure comprises 251 residues: 2,3-bisphosphoglycerate-dependent phosphoglycerate mutase (251 aa).

Residues 11–18 (RHGESDWN), 24–25 (TG), Arg-63, 90–93 (ERHY), Lys-101, 117–118 (RR), and 184–185 (GN) each bind substrate. Catalysis depends on His-12, which acts as the Tele-phosphohistidine intermediate. Glu-90 serves as the catalytic Proton donor/acceptor.

The protein belongs to the phosphoglycerate mutase family. BPG-dependent PGAM subfamily.

It catalyses the reaction (2R)-2-phosphoglycerate = (2R)-3-phosphoglycerate. It functions in the pathway carbohydrate degradation; glycolysis; pyruvate from D-glyceraldehyde 3-phosphate: step 3/5. Functionally, catalyzes the interconversion of 2-phosphoglycerate and 3-phosphoglycerate. This chain is 2,3-bisphosphoglycerate-dependent phosphoglycerate mutase, found in Mycobacterium ulcerans (strain Agy99).